We begin with the raw amino-acid sequence, 1104 residues long: MEIAINRLNADKDLEVFHDLDVNYVDTSKTAGPRAARTAALNNATVAAMGLMRDCYIQSTILNINLKIAVSDVCEMDLSSVKGFDQTSVLMNSQTNSLAKSVMYFLDKYQWKKVALVSPSAVLTAFAARVRSDLLDALTANKIDILVDSRLDPMSDITEKVKEDAEKARIFIICDWSSNANLLRNYIFKLGEMNKMQSGEYFVLGYISYDTNYQWLEASSGDQRLVHLGASDINDYNLTENDLHEVYKNVVILSDGPPPAEPNSTWEDIKTQVLKKKPAKMCPPYCNTTISEKITPRWDRIKLLFDSIQYLADATNDALNIGANIYQSDIFYEHLISRKVDSVTGVTEYIDGYGAIVGSMQIYYHFSSSSHNSYSLFPCARLAQSSLLNTVWSLTDYSEGLSIDFVNKSAPKDTPVCGFYGENCGPPANNTFIIVISVGVAVLIGLAIAAAFLYKRYRYERRLHSLFFMIDRNQIILKKHTNLMSQQSLRSMASIHGSVVAASQTLRDSHFFIEDYNNASSINASSIFNTGSTARAGPFGPIPGFGGVTGASEDEKWHQIPDFGVGLYEGRTVALKRIYRSDVEFTRSNRLEIAKLQESVNSNVIEFVGMVVQSPDVFVVYELAQRGSLKDILDNDDMPLDDVFRSQMTKDIIAGLEYLHSSPVGCHGRLKSTNCLIDARWMVRLSSFGLRELRGEETWQQEDDVQEGKDQLWTSPELLRWSTGLSQCGVLLVQKSDVYSLAIVLYELFGRLGPWGDEPMEPREIVSLVKREALAGKKPFRPDMAVLKESPRIVQETVVAAWTEDPLNRPSLHQIKRKLKPLTIGLKRTIMDNMVSMIEKYTDKLEKDIAERNEELEAEKAKSEALLKMMLPEVVADSLKLGSNVSAESFENCTVFFSDCPGFVEMSATSKPIDIVQFLNDLYTVFDRIIDQFDVYKVETIADAYMVASGLPVPNGNHHAGEIASLGLALLKAVESFKIRHLPNEKVRLRIGMNSGPCVAGVVGLKMPRYCLFGDTVNTASRMESNGIPLRINCSGTAKEILDQLGGYEIEERGIVEMKGKGKQMTYFVRGENSDMRRERIIRERVKFASLKKAQIQEKTYEFS.

At 1–431 the chain is on the extracellular side; that stretch reads MEIAINRLNA…ENCGPPANNT (431 aa). N-linked (GlcNAc...) asparagine glycans are attached at residues N43, N237, N263, N287, N407, and N429. The chain crosses the membrane as a helical span at residues 432–452; it reads FIIVISVGVAVLIGLAIAAAF. The Cytoplasmic segment spans residues 453–1104; the sequence is LYKRYRYERR…QIQEKTYEFS (652 aa). The Protein kinase domain occupies 528-823; that stretch reads FNTGSTARAG…QIKRKLKPLT (296 aa). Residues 534-542 and K576 contribute to the ATP site; that span reads ARAGPFGPI. The stretch at 838 to 871 forms a coiled coil; sequence IEKYTDKLEKDIAERNEELEAEKAKSEALLKMML. Residues 894–1024 enclose the Guanylate cyclase domain; sequence TVFFSDCPGF…DTVNTASRME (131 aa).

Belongs to the adenylyl cyclase class-4/guanylyl cyclase family. In terms of tissue distribution, expressed bilaterally in ASG sensory neurons.

Its subcellular location is the cell membrane. The enzyme catalyses GTP = 3',5'-cyclic GMP + diphosphate. In terms of biological role, guanylate cyclase involved in the production of the second messenger cGMP. In Caenorhabditis elegans, this protein is Receptor-type guanylate cyclase gcy-15.